A 169-amino-acid chain; its full sequence is N-alpha-acetyltransferase 50 (169 aa).

The 150-residue stretch at 5 to 154 (IELGDVTPHN…DAHVLQKNLK (150 aa)) folds into the N-acetyltransferase domain. Tyr30 is a substrate binding site. The active site involves Tyr72. A substrate-binding site is contributed by Met74. Residue 76-89 (LGCLAPYRRLGIGT) coordinates acetyl-CoA. 78–89 (CLAPYRRLGIGT) contributes to the CoA binding site. Residue His111 is part of the active site. Residue 116–125 (NESAIDFYRK) coordinates CoA. The substrate stretch occupies residues 137-140 (YYKR).

This sequence belongs to the acetyltransferase family. GNAT subfamily.

It localises to the cytoplasm. It is found in the nucleus. The catalysed reaction is N-terminal L-methionyl-L-alanyl-[protein] + acetyl-CoA = N-terminal N(alpha)-acetyl-L-methionyl-L-alanyl-[protein] + CoA + H(+). The enzyme catalyses N-terminal L-methionyl-L-seryl-[protein] + acetyl-CoA = N-terminal N(alpha)-acetyl-L-methionyl-L-seryl-[protein] + CoA + H(+). It catalyses the reaction N-terminal L-methionyl-L-valyl-[protein] + acetyl-CoA = N-terminal N(alpha)-acetyl-L-methionyl-L-valyl-[protein] + CoA + H(+). It carries out the reaction N-terminal L-methionyl-L-threonyl-[protein] + acetyl-CoA = N-terminal N(alpha)-acetyl-L-methionyl-L-threonyl-[protein] + CoA + H(+). The catalysed reaction is N-terminal L-methionyl-L-lysyl-[protein] + acetyl-CoA = N-terminal N(alpha)-acetyl-L-methionyl-L-lysyl-[protein] + CoA + H(+). The enzyme catalyses N-terminal L-methionyl-L-leucyl-[protein] + acetyl-CoA = N-terminal N(alpha)-acetyl-L-methionyl-L-leucyl-[protein] + CoA + H(+). It catalyses the reaction N-terminal L-methionyl-L-phenylalanyl-[protein] + acetyl-CoA = N-terminal N(alpha)-acetyl-L-methionyl-L-phenylalanyl-[protein] + CoA + H(+). It carries out the reaction N-terminal L-methionyl-L-tyrosyl-[protein] + acetyl-CoA = N-terminal N(alpha)-acetyl-L-methionyl-L-tyrosyl-[protein] + CoA + H(+). In terms of biological role, N-alpha-acetyltransferase that acetylates the N-terminus of proteins that retain their initiating methionine. Has a broad substrate specificity: able to acetylate the initiator methionine of most peptides, except for those with a proline in second position. Also displays N-epsilon-acetyltransferase activity by mediating acetylation of the side chain of specific lysines on proteins. The relevance of N-epsilon-acetyltransferase activity is however unclear. Required for sister chromatid cohesion during mitosis by promoting binding of CDCA5/sororin to cohesin. The chain is N-alpha-acetyltransferase 50 (naa50) from Xenopus tropicalis (Western clawed frog).